The sequence spans 213 residues: Neuromodulin (213 aa).

The segment at 1–213 (MLCCIRRTKP…AEEAGKDQNV (213 aa)) is disordered. 2 S-palmitoyl cysteine lipidation sites follow: Cys-3 and Cys-4. The span at 9-33 (KPVEKNEEADQEIKQDGTKPEENAH) shows a compositional bias: basic and acidic residues. One can recognise an IQ domain in the interval 32–61 (AHKAATKIQASFRGHITRKKMKDEDKDGEN). Acidic residues predominate over residues 57 to 73 (KDGENDTAPDESAETEE). Over residues 74-86 (KEERVSPSEEKPV) the composition is skewed to basic and acidic residues. A compositionally biased stretch (low complexity) spans 102–122 (PNSPAAEAPPTAATDSAPSDT). Acidic residues predominate over residues 157–169 (EKEEEEEEEEEEE). Residues 191-213 (QTDKKEALDDSKPAEEAGKDQNV) show a composition bias toward basic and acidic residues.

It belongs to the neuromodulin family. As to quaternary structure, binds calmodulin with a greater affinity in the absence of Ca(2+) than in its presence. Post-translationally, palmitoylated. Palmitoylation is essential for plasma membrane association.

The protein resides in the cell membrane. It localises to the cell projection. Its subcellular location is the growth cone membrane. The protein localises to the synapse. It is found in the filopodium membrane. This protein is associated with nerve growth. It is a major component of the motile 'growth cones' that form the tips of elongating axons. Plays a role in axonal and dendritic filopodia induction. This is Neuromodulin (gap43) from Carassius auratus (Goldfish).